Reading from the N-terminus, the 652-residue chain is Leucine aminopeptidase 2 (652 aa).

A peptide is bound by residues 165 to 167 (QLE) and 293 to 298 (PYGGME). His-322 serves as a coordination point for Zn(2+). The active-site Proton acceptor is the Glu-323. Positions 326 and 345 each coordinate Zn(2+). The Proton donor role is filled by Tyr-411.

Belongs to the peptidase M1 family. It depends on Zn(2+) as a cofactor.

The protein resides in the cytoplasm. It is found in the nucleus. It carries out the reaction an epoxide + H2O = an ethanediol. Functionally, aminopeptidase that preferentially cleaves di- and tripeptides. Also has low epoxide hydrolase activity (in vitro). Can hydrolyze the epoxide leukotriene LTA(4) but it forms preferentially 5,6-dihydroxy-7,9,11,14-eicosatetraenoic acid rather than the cytokine leukotriene B(4) as the product compared to the homologous mammalian enzyme (in vitro). In Candida glabrata (strain ATCC 2001 / BCRC 20586 / JCM 3761 / NBRC 0622 / NRRL Y-65 / CBS 138) (Yeast), this protein is Leucine aminopeptidase 2.